We begin with the raw amino-acid sequence, 22 residues long: Fuctinin-1 (22 aa).

The tract at residues 1–22 is disordered; it reads SASPGLPKGEKEQQEAIEHIDE. Over residues 8–22 the composition is skewed to basic and acidic residues; sequence KGEKEQQEAIEHIDE.

It to human SET/PHAPII protein. In terms of assembly, oligomer.

The protein localises to the cytoplasm. Its function is as follows. Has a role in the physiological regulation of fucosylation processes. This chain is Fuctinin-1, found in Rattus norvegicus (Rat).